The following is a 257-amino-acid chain: MSTPAFTVVIPARYGASRLPGKPLADLLGEPVVQHVYRRAVESGAARVVVATDDARIESACRDFGAEVLLTAPDHPTGTDRIAEVVDRLALVDEAIVVNLQGDEPLMPPELVALVAERLDTDPDAAIATLATPVTAADELFEPSVVKVVRDHRDHALYFSRAPVPWDRDRFDGIDDGAVAAGGWLRHLGLYAYRAAFLRRFPGLEPAPPERLESLEQLRALWHGFAIQVAATDQRPGPGVDTPADLEAVARRLQSTR.

This sequence belongs to the KdsB family.

The protein resides in the cytoplasm. It carries out the reaction 3-deoxy-alpha-D-manno-oct-2-ulosonate + CTP = CMP-3-deoxy-beta-D-manno-octulosonate + diphosphate. It participates in nucleotide-sugar biosynthesis; CMP-3-deoxy-D-manno-octulosonate biosynthesis; CMP-3-deoxy-D-manno-octulosonate from 3-deoxy-D-manno-octulosonate and CTP: step 1/1. It functions in the pathway bacterial outer membrane biogenesis; lipopolysaccharide biosynthesis. Its function is as follows. Activates KDO (a required 8-carbon sugar) for incorporation into bacterial lipopolysaccharide in Gram-negative bacteria. This chain is 3-deoxy-manno-octulosonate cytidylyltransferase, found in Halorhodospira halophila (strain DSM 244 / SL1) (Ectothiorhodospira halophila (strain DSM 244 / SL1)).